The chain runs to 695 residues: Scarecrow-like protein 31 (695 aa).

2 disordered regions span residues 105–136 (VISD…NSSN) and 234–260 (ISKT…RSKQ). Over residues 113 to 136 (SSIPNNSITTSSSSNSGDYSNSSN) the composition is skewed to low complexity. The stretch at 233–266 (AISKTRKNHHEREEEEDDLEEARRRSKQFAVNEE) forms a coiled coil. Residues 306 to 693 (AKKKSRAVDF…RILFSSSCWV (388 aa)) form the GRAS domain. Residues 313 to 377 (VDFRTLLTLC…EGSTGTMIQS (65 aa)) form a leucine repeat I (LRI) region. The segment at 396-461 (YSVFLSASPF…PGLRKLRITG (66 aa)) is VHIID. The short motif at 427 to 431 (LHIVD) is the VHIID element. The leucine repeat II (LRII) stretch occupies residues 477-509 (DTGRRLTEYCKRFGVPFEYNAIASKNWETIKME). The PFYRE stretch occupies residues 519 to 614 (LAVNAVLRFK…GEFYGREVMN (96 aa)). The SAW stretch occupies residues 617 to 693 (ACEGVDRVER…RILFSSSCWV (77 aa)).

The protein belongs to the GRAS family. In terms of tissue distribution, expressed in seedlings, roots, cotyledons, leaves and sepals.

The protein localises to the nucleus. Its function is as follows. Probable transcription factor involved in plant development. This chain is Scarecrow-like protein 31 (SCL31), found in Arabidopsis thaliana (Mouse-ear cress).